Here is a 467-residue protein sequence, read N- to C-terminus: MESSTGPRMPLLKYCSVATSLKAPGWDGAAPPWDLSFTYPFALQAPWLTGHKPLARHASSCPCLHVADPAWQGPGWLGRAGDAANTWVLARREADGFYYRAQIKATPELERQGVLLVEFEAPLVAGPKLPAQQQRVVLEEDVIPLSPSVGYSLRPGDKVLALWEPGQQQYGPGTVLLGLEMRDPQRASKEKEITVHFWNGKAAKVPLGGVQSVSLTIWKKAVERLHKSFTREHPRPLHWAPCCSLLGPITGRITNELPPDAPFLCPLCHHHACCQLLCQGCLCGCPPCGTTWWPLTRTSEVMARELPELEPTAQLLPLEGPKEEKVAMHAPLAVSSSSSSSCEQDGVENDLEMGPPQRLMVNSAVNTDPIFLEMPLRQSGLCQPEWRYWKRNGPEPCLGKPGTRYSNICKEEKDHKQQRAQTAVVGTTKELVSKATHMKPPRTPPGEAEHRKRSQSLAICQWNKNSR.

Residues 416 to 467 (KQQRAQTAVVGTTKELVSKATHMKPPRTPPGEAEHRKRSQSLAICQWNKNSR) form a disordered region. Residues 455–467 (QSLAICQWNKNSR) are compositionally biased toward polar residues.

This is an uncharacterized protein from Homo sapiens (Human).